The following is a 573-amino-acid chain: PCNA-interacting partner (573 aa).

Positions 492 to 532 (TGGQVKNKPCKNVANKRSKRKQVDIQSETTNAQENEPPQKK) are disordered. A compositionally biased stretch (polar residues) spans 515 to 527 (DIQSETTNAQENE).

Belongs to the PARI family.

It is found in the cytoplasm. Its subcellular location is the nucleus. In terms of biological role, required to suppress inappropriate homologous recombination, thereby playing a central role DNA repair and in the maintenance of genomic stability. The polypeptide is PCNA-interacting partner (parpbp) (Xenopus tropicalis (Western clawed frog)).